The chain runs to 97 residues: Eotaxin (97 aa).

An N-terminal signal peptide occupies residues 1–23; the sequence is MQLSTALLFLLLTATSFTSQVLA. 2 disulfides stabilise this stretch: C32/C57 and C33/C73. O-linked (GalNAc...) threonine glycosylation occurs at T94.

It belongs to the intercrine beta (chemokine CC) family.

Its subcellular location is the secreted. In response to the presence of allergens, this protein directly promotes the accumulation of eosinophils (a prominent feature of allergic inflammatory reactions), but not lymphocytes, macrophages or neutrophils. Binds to CCR3. This is Eotaxin (Ccl11) from Rattus norvegicus (Rat).